A 275-amino-acid chain; its full sequence is Polyamine aminopropyltransferase 1 (275 aa).

The region spanning E2–K235 is the PABS domain. Q31 lines the S-methyl-5'-thioadenosine pocket. The spermidine site is built by H62 and D86. S-methyl-5'-thioadenosine is bound by residues E106 and D137–G138. D155 (proton acceptor) is an active-site residue. Residue D155–E158 coordinates spermidine. Residue P162 participates in S-methyl-5'-thioadenosine binding.

The protein belongs to the spermidine/spermine synthase family. Homodimer or homotetramer.

It is found in the cytoplasm. The catalysed reaction is S-adenosyl 3-(methylsulfanyl)propylamine + putrescine = S-methyl-5'-thioadenosine + spermidine + H(+). It functions in the pathway amine and polyamine biosynthesis; spermidine biosynthesis; spermidine from putrescine: step 1/1. Functionally, catalyzes the irreversible transfer of a propylamine group from the amino donor S-adenosylmethioninamine (decarboxy-AdoMet) to putrescine (1,4-diaminobutane) to yield spermidine. The polypeptide is Polyamine aminopropyltransferase 1 (Bacillus cereus (strain ATCC 14579 / DSM 31 / CCUG 7414 / JCM 2152 / NBRC 15305 / NCIMB 9373 / NCTC 2599 / NRRL B-3711)).